Reading from the N-terminus, the 852-residue chain is Nucleolar protein 14 homolog (852 aa).

The tract at residues methionine 1–aspartate 40 is disordered. The span at arginine 20–arginine 35 shows a compositional bias: polar residues. Positions isoleucine 190–asparagine 221 form a coiled coil. Disordered stretches follow at residues arginine 288 to aspartate 324 and leucine 338 to aspartate 410. The span at glycine 344 to aspartate 353 shows a compositional bias: basic and acidic residues. Over residues glutamate 354–asparagine 381 the composition is skewed to acidic residues. Residues lysine 774 to lysine 851 are a coiled coil.

This sequence belongs to the NOP14 family. Component of the ribosomal small subunit (SSU) processome.

It localises to the nucleus. The protein localises to the nucleolus. Its function is as follows. Involved in nucleolar processing of pre-18S ribosomal RNA. Has a role in the nuclear export of 40S pre-ribosomal subunit to the cytoplasm. This is Nucleolar protein 14 homolog (l(3)07882) from Drosophila melanogaster (Fruit fly).